We begin with the raw amino-acid sequence, 276 residues long: 1H-3-hydroxy-4-oxoquinaldine 2,4-dioxygenase (276 aa).

Residues 28 to 150 enclose the AB hydrolase-1 domain; the sequence is PAILLLPGWC…TLLKDPERWR (123 aa). Substrate-binding positions include 36-38, 100-101, and tryptophan 160; these read WCH and HS. Catalysis depends on histidine 251, which acts as the Proton donor/acceptor.

It belongs to the AB hydrolase superfamily. Requires None. Contrary to most other dioxygenases, this enzyme does not require a cofactor for catalysis. as cofactor.

The catalysed reaction is 3-hydroxy-2-methyl-1H-quinolin-4-one + O2 = N-acetylanthranilate + CO + H(+). Ring-cleaving dioxygenase involved in quinaldine degradation and utilization. In Paenarthrobacter nitroguajacolicus (Arthrobacter nitroguajacolicus), this protein is 1H-3-hydroxy-4-oxoquinaldine 2,4-dioxygenase (hod).